A 61-amino-acid chain; its full sequence is Photosystem II reaction center X protein (61 aa).

Residues 26–46 (IGSFIAAALLIVIPATAFLIF) form a helical membrane-spanning segment.

It belongs to the PsbX family. Type 2 subfamily. PSII consists of a core antenna complex that captures photons, and an electron transfer chain that converts photonic excitation into a charge separation. PSII forms dimeric complexes.

The protein localises to the cellular thylakoid membrane. Functionally, involved in the binding and/or turnover of quinones at the Q(B) site of Photosystem II. This Prochlorococcus marinus (strain MIT 9215) protein is Photosystem II reaction center X protein.